The sequence spans 125 residues: U11-myrmicitoxin-Ta1a (125 aa).

Residues 1 to 21 (MKTVIFILGFAFVAILIPTNG) form the signal peptide. The propeptide occupies 22–91 (ESMADADAMA…RAMAAAYAAA (70 aa)). The cysteines at positions 101 and 124 are disulfide-linked.

The protein belongs to the formicidae venom precursor-01 superfamily. As to expression, expressed by the venom gland.

It is found in the secreted. The protein localises to the target cell membrane. Functionally, neurotoxin that causes irreversible rapid flaccid paralysis in blowflies and honeybees upon intrathoracic injection. Causes a quick and irreversible cytolytic effect (at 10 uM) indicating it possibly acts as a pore-forming peptide. Shows only weak effect on aphids (A.pisum) at high doses 24 hours post intrathoracic injection. In vitro, is not cytotoxic on the dipteran S2 Drosophila embryonic cell line. The protein is U11-myrmicitoxin-Ta1a of Tetramorium africanum (Fierce ant).